We begin with the raw amino-acid sequence, 309 residues long: DNA-directed RNA polymerase subunit alpha (309 aa).

An alpha N-terminal domain (alpha-NTD) region spans residues 1 to 227 (MTFQVECVES…ALFEPLKNVS (227 aa)). The interval 237–309 (EPTPESQTPI…GIKLQESKVS (73 aa)) is alpha C-terminal domain (alpha-CTD).

This sequence belongs to the RNA polymerase alpha chain family. In cyanobacteria the RNAP catalytic core is composed of 2 alpha, 1 beta, 1 beta', 1 gamma and 1 omega subunit. When a sigma factor is associated with the core the holoenzyme is formed, which can initiate transcription.

It carries out the reaction RNA(n) + a ribonucleoside 5'-triphosphate = RNA(n+1) + diphosphate. In terms of biological role, DNA-dependent RNA polymerase catalyzes the transcription of DNA into RNA using the four ribonucleoside triphosphates as substrates. The sequence is that of DNA-directed RNA polymerase subunit alpha from Synechococcus elongatus (strain ATCC 33912 / PCC 7942 / FACHB-805) (Anacystis nidulans R2).